Consider the following 518-residue polypeptide: DNA nucleotidylexotransferase (518 aa).

A Nuclear localization signal motif is present at residues 11-17 (FGKKRQK). One can recognise a BRCT domain in the interval 27-124 (IYEIKFHEFV…KPVDTKGKYQ (98 aa)). The interval 153-518 (SQYACQRRTT…EYIQPSERNA (366 aa)) is mediates interaction with DNTTIP2. Residues 260–264 (VGLKT) form an involved in DNA binding region. Residues 335–340 (GFRRGK) and 344–347 (HDVD) each bind a 2'-deoxyribonucleoside 5'-triphosphate. Residues aspartate 345, aspartate 347, and aspartate 442 each contribute to the Mg(2+) site. 457–458 (GW) lines the a 2'-deoxyribonucleoside 5'-triphosphate pocket.

Belongs to the DNA polymerase type-X family. In terms of assembly, interacts with PRP19 and DNTTIP1. Interacts with TRERF1. Forms a ternary complex with DNTTIP2 and core histone. Released from this complex by PCNA. Mg(2+) is required as a cofactor.

It localises to the nucleus. The enzyme catalyses DNA(n) + a 2'-deoxyribonucleoside 5'-triphosphate = DNA(n+1) + diphosphate. In terms of biological role, template-independent DNA polymerase which catalyzes the random addition of deoxynucleoside 5'-triphosphate to the 3'-end of a DNA initiator. One of the in vivo functions of this enzyme is the addition of nucleotides at the junction (N region) of rearranged Ig heavy chain and T-cell receptor gene segments during the maturation of B- and T-cells. The sequence is that of DNA nucleotidylexotransferase (DNTT) from Monodelphis domestica (Gray short-tailed opossum).